The sequence spans 312 residues: Glyoxylate/hydroxypyruvate reductase A (312 aa).

Arg227 is a catalytic residue. His275 serves as the catalytic Proton donor.

This sequence belongs to the D-isomer specific 2-hydroxyacid dehydrogenase family. GhrA subfamily.

It localises to the cytoplasm. It catalyses the reaction glycolate + NADP(+) = glyoxylate + NADPH + H(+). It carries out the reaction (R)-glycerate + NAD(+) = 3-hydroxypyruvate + NADH + H(+). The enzyme catalyses (R)-glycerate + NADP(+) = 3-hydroxypyruvate + NADPH + H(+). Functionally, catalyzes the NADPH-dependent reduction of glyoxylate and hydroxypyruvate into glycolate and glycerate, respectively. The sequence is that of Glyoxylate/hydroxypyruvate reductase A from Escherichia coli O127:H6 (strain E2348/69 / EPEC).